The chain runs to 1363 residues: Tonsoku-like protein (1363 aa).

TPR repeat units follow at residues 27 to 60, 67 to 100, 107 to 147, 162 to 195, 202 to 235, 242 to 275, 311 to 344, and 352 to 385; these read AAYCHQLGELLASHGRFKDALEEHQQELHLLESV, AVAHRKIGERLAEMENYSAALKHQHLYLDLAGSL, QRAW…VDEK, TRLYLNLGLTCESLQQTALCNNYFKKSIFLAEQN, FRARYNLGAIHWRGGQHSQAMRCLEGARECARAM, SECCVLVSQVLQDLGDFLAAKRALKKAYRLGSQK, MAICEQLGDLFSKAGDFPKAAEAYQKQLHLAELL, and AVIHVSLATTLGDMKDHRKAVHHYEEELRLRKGN. Residues 460-511 form a disordered region; sequence SMAKDTEEEEEEEEEEEEEASEAPETSELELSESEDDADGLSQQLEEDEELQ. The span at 465–510 shows a compositional bias: acidic residues; the sequence is TEEEEEEEEEEEEEASEAPETSELELSESEDDADGLSQQLEEDEEL. ANK repeat units follow at residues 528 to 557, 561 to 590, and 597 to 626; these read MGETLLHRACIEGQLRRVQDLVKQGHPLNP, CGWTPLHEACNYGHLEIVRFLLDHGAAVDD, and DGITPLHDALNCGHFEVAELLIERGASVTL. The segment at 662–786 is disordered; that stretch reads ERLQMASSGQ…KSRETATSSA (125 aa). Residues 666–684 are compositionally biased toward polar residues; that stretch reads MASSGQASRSSPALQTIPS. Residues 692–713 are compositionally biased toward pro residues; that stretch reads TSPPSSPCPEPSSYTPRPPEAS. The segment covering 771-780 has biased composition (basic and acidic residues); it reads KIPDPPKSRE. R796 is modified (omega-N-methylarginine). Disordered stretches follow at residues 841 to 866 and 883 to 909; these read PLTRSGRPSTSVSDYERCPARPRTRV and AGDGSLNAEPAENPSVPRTSGPNKENY. Positions 842–853 are enriched in polar residues; sequence LTRSGRPSTSVS. LRR repeat units lie at residues 1060 to 1081, 1088 to 1108, 1119 to 1140, 1147 to 1168, 1179 to 1199, 1206 to 1214, 1238 to 1261, 1266 to 1287, 1296 to 1317, and 1322 to 1343; these read ALRELRLAGNRLGDACATELLA, NLVLLDLSSNHLGQEGLRQLV, NLEELDLSMNPLGDGCGQALAS, MLSTLRLQACGFSSSFFLSHQA, HLKTLSLSYNLLGAPALARVL, TLKRLDLSS, ALAHLTLSANCLGDKAVRELSRCL, SLTSLDLSANPEVSCASLEELL, GLSFLGLSGCSIQGPLNSDLWD, and QLQELQLCTKDLSTKDRDSVCQ.

This sequence belongs to the Tonsoku family. As to quaternary structure, component of the MMS22L-TONSL complex, a complex at least composed of MMS22L and TONSL/NFKBIL2. Interacts with the MCM complex, the FACT complex and the RPA complex. Interacts with MCM5; the interaction is direct. Binds histones, with a strong preference for histone H3.1 (histones H3.1 and H3-4/H3.1t). Interacts (via ANK repeats) with histone H4; specifically binds histone H4 lacking methylation at 'Lys-20' (H4K20me0). May interact with DNAJC9; the interaction seems to be histone-dependent.

It is found in the nucleus. The protein resides in the chromosome. The protein localises to the cytoplasm. Functionally, component of the MMS22L-TONSL complex, a complex that promotes homologous recombination-mediated repair of double-strand breaks (DSBs) at stalled or collapsed replication forks. The MMS22L-TONSL complex is required to maintain genome integrity during DNA replication. It mediates the assembly of RAD51 filaments on single-stranded DNA (ssDNA): the MMS22L-TONSL complex is recruited to DSBs following histone replacement by histone chaperones and eviction of the replication protein A complex (RPA/RP-A) from DSBs. Following recruitment to DSBs, the TONSL-MMS22L complex promotes recruitment of RAD51 filaments and subsequent homologous recombination. Within the complex, TONSL acts as a histone reader, which recognizes and binds newly synthesized histones following their replacement by histone chaperones. Specifically binds histone H4 lacking methylation at 'Lys-20' (H4K20me0) and histone H3.1. The protein is Tonsoku-like protein of Mus musculus (Mouse).